Here is a 120-residue protein sequence, read N- to C-terminus: U13-lycotoxin-Ls1f (120 aa).

Positions 1 to 16 (MKILFVLISILYAVYC) are cleaved as a signal peptide. Positions 17 to 54 (FSSEEDVDSAYLANELEPVEDINSEQYAALEPKEEQER) are excised as a propeptide. 4 cysteine pairs are disulfide-bonded: Cys56–Cys70, Cys63–Cys76, Cys69–Cys87, and Cys78–Cys85. Residues 56–95 (CAGMGQDCKDDCDCCLNIATCNCWFGRYFCSCTFGDYQTC) enclose the Agouti domain.

It belongs to the neurotoxin 05 (agouti) family. Post-translationally, contains 6 disulfide bonds. In terms of tissue distribution, expressed by the venom gland.

The protein localises to the secreted. In Lycosa singoriensis (Wolf spider), this protein is U13-lycotoxin-Ls1f.